Consider the following 379-residue polypeptide: Mannan endo-1,4-beta-mannosidase 7 (379 aa).

Residues tryptophan 64 and asparagine 179 each coordinate substrate. Glutamate 180 functions as the Proton donor in the catalytic mechanism. Tyrosine 260 lines the substrate pocket. Glutamate 300 serves as the catalytic Nucleophile. Tryptophan 342 contributes to the substrate binding site.

The protein belongs to the glycosyl hydrolase 5 (cellulase A) family. Expression not detected.

It catalyses the reaction Random hydrolysis of (1-&gt;4)-beta-D-mannosidic linkages in mannans, galactomannans and glucomannans.. The protein is Mannan endo-1,4-beta-mannosidase 7 (MAN7) of Oryza sativa subsp. japonica (Rice).